We begin with the raw amino-acid sequence, 210 residues long: Protein Nef (210 aa).

Residues M1–V37 form a disordered region. G2 is lipidated: N-myristoyl glycine; by host. A Phosphoserine; by host modification is found at S6. Positions I16–P29 are enriched in basic and acidic residues. Positions E66–E69 are acidic; interacts with host PACS1 and PACS2; stabilizes the interaction of NEF/MHC-I with host AP1M1; necessary for MHC-I internalization. Positions P73 to P82 are SH3-binding; interaction with Src family tyrosine kinases. Residues P76–P79 carry the PxxP; stabilizes the interaction of NEF/MHC-I with host AP1M1; necessary for MHC-I internalization motif. The segment at E112 to W128 is mediates dimerization, Nef-PTE1 interaction. Residues V152 to V184 are binding to ATP6V1H. Positions L168–L169 match the Dileucine internalization motif; necessary for CD4 internalization motif. Residues E178–D179 carry the Diacidic; necessary for CD4 internalization motif.

Belongs to the lentivirus primate group Nef protein family. Monomer; cytosolic form. Homodimer; membrane bound form. Interacts with Nef associated p21-activated kinase (PAK2); this interaction activates PAK2. Associates with the Nef-MHC-I-AP1 complex; this complex is required for MHC-I internalization. Interacts (via C-terminus) with host PI3-kinase. Interacts with host PACS1; this interaction seems to be weak. Interacts with host PACS2. Interacts with host LCK and MAPK3; these interactions inhibit the kinase activity of the latter. Interacts with host ATP6V1H; this interaction may play a role in CD4 endocytosis. Associates with the CD4-Nef-AP2 complex; this complex is required for CD4 internalization. Interacts with host AP2 subunit alpha and AP2 subunit sigma2. Interacts with TCR-zeta chain; this interaction up-regulates the Fas ligand (FasL) surface expression. Interacts with host HCK, LYN, and SRC; these interactions activate the Src family kinases. Interacts with MAP3K5; this interaction inhibits the Fas and TNFR-mediated death signals. Interacts with beta-COP and PTE1. Interacts with human RACK1; this increases Nef phosphorylation by PKC. Interacts with TP53; this interaction decreases the half-life of TP53, protecting the infected cell against p53-mediated apoptosis. In terms of processing, the virion-associated Nef proteins are cleaved by the viral protease to release the soluble C-terminal core protein. Nef is probably cleaved concomitantly with viral structural proteins on maturation of virus particles. Myristoylated. Post-translationally, phosphorylated on serine residues, probably by host PKCdelta and theta.

The protein resides in the host cell membrane. The protein localises to the virion. It localises to the secreted. It is found in the host Golgi apparatus membrane. Its function is as follows. Factor of infectivity and pathogenicity, required for optimal virus replication. Alters numerous pathways of T-lymphocyte function and down-regulates immunity surface molecules in order to evade host defense and increase viral infectivity. Alters the functionality of other immunity cells, like dendritic cells, monocytes/macrophages and NK cells. In terms of biological role, in infected CD4(+) T-lymphocytes, down-regulates the surface MHC-I, mature MHC-II, CD4, CD28, CCR5 and CXCR4 molecules. Mediates internalization and degradation of host CD4 through the interaction of with the cytoplasmic tail of CD4, the recruitment of AP-2 (clathrin adapter protein complex 2), internalization through clathrin coated pits, and subsequent transport to endosomes and lysosomes for degradation. Diverts host MHC-I molecules to the trans-Golgi network-associated endosomal compartments by an endocytic pathway to finally target them for degradation. MHC-I down-regulation may involve AP-1 (clathrin adapter protein complex 1) or possibly Src family kinase-ZAP70/Syk-PI3K cascade recruited by PACS2. In consequence infected cells are masked for immune recognition by cytotoxic T-lymphocytes. Decreasing the number of immune receptors also prevents reinfection by more HIV particles (superinfection). Down-regulates host SERINC3 and SERINC5 thereby excluding these proteins from the viral particles. Virion infectivity is drastically higher when SERINC3 or SERINC5 are excluded from the viral envelope, because these host antiviral proteins impair the membrane fusion event necessary for subsequent virion penetration. Bypasses host T-cell signaling by inducing a transcriptional program nearly identical to that of anti-CD3 cell activation. Interaction with TCR-zeta chain up-regulates the Fas ligand (FasL). Increasing surface FasL molecules and decreasing surface MHC-I molecules on infected CD4(+) cells send attacking cytotoxic CD8+ T-lymphocytes into apoptosis. Functionally, plays a role in optimizing the host cell environment for viral replication without causing cell death by apoptosis. Protects the infected cells from apoptosis in order to keep them alive until the next virus generation is ready to strike. Inhibits the Fas and TNFR-mediated death signals by blocking MAP3K5/ASK1. Decreases the half-life of TP53, protecting the infected cell against p53-mediated apoptosis. Inhibits the apoptotic signals regulated by the Bcl-2 family proteins through the formation of a Nef/PI3-kinase/PAK2 complex that leads to activation of PAK2 and induces phosphorylation of host BAD. Its function is as follows. Extracellular Nef protein targets CD4(+) T-lymphocytes for apoptosis by interacting with CXCR4 surface receptors. The sequence is that of Protein Nef from Human immunodeficiency virus type 1 group M subtype B (isolate ARV2/SF2) (HIV-1).